The sequence spans 62 residues: Potassium channel toxin kappa-KTx 3.3 (62 aa).

The first 26 residues, 1-26 (MKSTLMTASLLILVLLSIVDYASVYA), serve as a signal peptide directing secretion. The propeptide occupies 27–36 (ELIDSEISME). Intrachain disulfides connect Cys43/Cys61 and Cys47/Cys57.

Belongs to the short scorpion toxin superfamily. Potassium channel inhibitor kappa-KTx family. Kappa-KTx 3 subfamily. As to expression, expressed by the venom gland.

It is found in the secreted. Potassium channel inhibitor (Kv). This is Potassium channel toxin kappa-KTx 3.3 from Heterometrus petersii (Asian forest scorpion).